Here is a 373-residue protein sequence, read N- to C-terminus: Transcription factor SPATULA (373 aa).

Residues 1 to 21 show a composition bias toward basic and acidic residues; it reads MISQREEREEKKQRVMGDKKL. Disordered regions lie at residues 1-46 and 141-210; these read MISQ…PSSS and VQGN…KRRR. A compositionally biased stretch (low complexity) spans 141–160; sequence VQGNSSGTRVSSSSVGASGN. Acidic residues predominate over residues 161 to 177; the sequence is ETDEYDCESEEGGEAVV. Residues 182-191 are compositionally biased toward low complexity; sequence SSKSGPSSRS. A compositionally biased stretch (basic and acidic residues) spans 197-210; that stretch reads RAAEVHNLSEKRRR. In terms of domain architecture, bHLH spans 197–246; that stretch reads RAAEVHNLSEKRRRSRINEKMKALQSLIPNSNKTDKASMLDEAIEYLKQL.

As to quaternary structure, homodimer. Interacts with HEC1, HEC2 and HEC3. Binds to RGL2 and RGA. In terms of tissue distribution, expressed in lateral root caps, young leaves, stipules, maturing pith cells of the stem, differentiating vascular cells, shoot apical meristems and flowers.

The protein localises to the nucleus. Functionally, transcription factor that plays a role in floral organogenesis. Promotes the growth of carpel margins and of pollen tract tissues derived from them. This chain is Transcription factor SPATULA (SPT), found in Arabidopsis thaliana (Mouse-ear cress).